The sequence spans 155 residues: Large ribosomal subunit protein eL24 (155 aa).

Over residues lysine 93–arginine 123 the composition is skewed to basic and acidic residues. The segment at lysine 93–arginine 155 is disordered.

Belongs to the eukaryotic ribosomal protein eL24 family.

The chain is Large ribosomal subunit protein eL24 (RPL24) from Yarrowia lipolytica (strain CLIB 122 / E 150) (Yeast).